Reading from the N-terminus, the 940-residue chain is Isoleucine--tRNA ligase (940 aa).

Positions 58 to 68 match the 'HIGH' region motif; the sequence is PYANGSIHIGH. Position 564 (E564) interacts with L-isoleucyl-5'-AMP. Positions 605–609 match the 'KMSKS' region motif; that stretch reads KMSKS. K608 provides a ligand contact to ATP. 4 residues coordinate Zn(2+): C903, C906, C923, and C926.

It belongs to the class-I aminoacyl-tRNA synthetase family. IleS type 1 subfamily. As to quaternary structure, monomer. It depends on Zn(2+) as a cofactor.

Its subcellular location is the cytoplasm. It catalyses the reaction tRNA(Ile) + L-isoleucine + ATP = L-isoleucyl-tRNA(Ile) + AMP + diphosphate. Its function is as follows. Catalyzes the attachment of isoleucine to tRNA(Ile). As IleRS can inadvertently accommodate and process structurally similar amino acids such as valine, to avoid such errors it has two additional distinct tRNA(Ile)-dependent editing activities. One activity is designated as 'pretransfer' editing and involves the hydrolysis of activated Val-AMP. The other activity is designated 'posttransfer' editing and involves deacylation of mischarged Val-tRNA(Ile). The chain is Isoleucine--tRNA ligase from Shewanella woodyi (strain ATCC 51908 / MS32).